The following is a 434-amino-acid chain: MHVIVLGSGVIGTTTAYYLARQGAQVTVLERRAGPADETSYGNAGQVSPGYSTPWAAPGIPLKALKWMFQKHAPLAIRADGSFYQWRWLAAMLANCSAGRYSVNKERMLRLAEYSRDCLRTLRADTGIQYEQRTQGTLQLFRTAAQMEAARRDIAVLEECGVPYELLDRNRLPTAEPALARALDKLAGGLRLPNDETGDCRRFTLQLADKAKALGVQFRFNQQVEGLDVRGGQVAGVRVGGEQLAADCYVAAFGSYTRGFLRPLGLDLPVYPVKGYSLTIPMTDESAAPVSTILDETYKVAVTRFDQRIRVGGMAELAGFDLRLKEARRKTLELVVNDLSPGSGAVEQAEFWTGLRPMTPDSTPIIGATKYGNLFLNTGHGTLGWTMACGSGQLVADQVCGRQPAIRADDLALSRYGAGGQAGGGVARAQHNAA.

3–17 (VIVLGSGVIGTTTAY) lines the FAD pocket.

This sequence belongs to the DadA oxidoreductase family. Requires FAD as cofactor.

It carries out the reaction a D-alpha-amino acid + A + H2O = a 2-oxocarboxylate + AH2 + NH4(+). Oxidative deamination of D-amino acids. In Bordetella parapertussis (strain 12822 / ATCC BAA-587 / NCTC 13253), this protein is D-amino acid dehydrogenase.